A 61-amino-acid polypeptide reads, in one-letter code: Potassium channel toxin alpha-KTx 6.9 (61 aa).

Residues 1–23 form the signal peptide; it reads MNAKFILLLLVVTTTTLLPDAKG. 4 cysteine pairs are disulfide-bonded: C29/C50, C35/C55, C39/C57, and C45/C60.

This sequence belongs to the short scorpion toxin superfamily. Potassium channel inhibitor family. Alpha-KTx 06 subfamily. Expressed by the venom gland.

Its subcellular location is the secreted. Inhibits Kv1.2/KCNA2 and Kv1.3/KCNA3 voltage-gated potassium channels. This Opistophthalmus carinatus (African yellow leg scorpion) protein is Potassium channel toxin alpha-KTx 6.9.